The primary structure comprises 1464 residues: MALSKAKGNDGKITYPPGVKEISDKISKEEMVRRLKMVVKTFMDMDQDSEEEKEQYLNLALHLASDFFLKHPDKDVRLLVACCLADIFRIYAPEAPYTSPDKLKDIFMFITRQLKGLEDTKSPQFNRYFYLLENIAWVKSYNICFELEDCNEIFTQLYRTLFSVINNGHNQKVHMHMVDLMSSIVCEGDTVSQELLDSVLVNLVPAHKNLNKQAYDLAKALLKRTAQAIEPYITNFFNQVLMLGKTSISDLSEHVFDLILELYNIDSHLLLSVLPQLEFKLKSNDNEERLQVVKLLAKMFGAKDSELASQNKPLWQCYLGRFNDIHVPIRLECVKFASHSLMNHPDLAKDLTEYLKVRSHDPEEAIRHDVIVSIVTAAKKDLLLVNDQLLNFVRERTLDKRWRVRKEAMMGLAQIYKKYSLQVEAGKESAKQISWIKDKLLHIYYQNSIDDRLLVERIFAQYMVPHNLETTERMKCLYYLYATLDTNAVKALNEMWKCQNMLRHHVKDLLDLIKKPKTEAGSKAIFSKVMVITKNLPDPGKGQDFLKKFTQVLEDDEKIRGQLEKLVSPTCSYKQAEVCVRDITKKLGNPKQPTNPFLEMIKFLLERIAPVHIDTESISSLIKLVNKSIDGTADDEDEGVPTDQAIRAGLELLKVLSFTHPISFHSAETFESLLACLKMDDEKVAEAALQIFKNTGNKIEEDFPHIRSALLPVLQQKAKKGSPRQAKYSIHCIHAIFSSKETQFAQIFEPLHKSLDPGNPEQLITSLVTIGHIAQLAPDQFTAPLKSMVATFVVKDLLMSDQLPGKKTTKLWVPDDEVSQETMVKIQAIKMMVRWLLGMKNNLSKSGNSTLRLLTAILHTDGDLTEHGKLSKPDMSRLRLAAGSAIVKLAQEPCYHEIITLEQYQLCALVINDECYQVRQLFAQKLHKGLSRLRLPLEYMAICALCAKDPVKERRAHARQCLVKNINVRREYLKQHAAVSEKLFSLLPEYVVPYTVHLLTHDPDYVKVQDIEQLKDIKECLWFVLEILMSKNENNSHAFIRKMVEYIKQTKDAQNPDDQKMNEKMYTVCDVAMNIIISKSTTYSLESPKDPVLPARFFTQPDKNFSNTKHYLPAELKSFFTPGKPKSTNVLGAVNKPLSSAGKQMQSKSSRMETVSNASSGSNPSSPGRIKGRLDSTELDQIEYEDYTMISSPLSGKKSDKRDDSDLLKSEVEKPRRGRKQPLIDPDDSFSMDELSKPAQEPKSRTSQRGRKRAAAASESEEQAWQEKRLKEDLLENEDEQNSPPKKGRRGRPPKSAKMAISKEEPPVTTPKRGRKNVVPIESPPTDEEDHLEISEEQDSENIDQKRKGRGSSKKTPQKSDSTDSALDTSRPTPQKRRGRPPKTPTVQQKKSHVGRPRKVVSKEPESEEEMEISQNSPALSENISNEEETADEEVVAPSTGRRRTAKKRRWIQRMKSELEGPLL.

An HEAT repeat occupies 383-419 (LLVNDQLLNFVRERTLDKRWRVRKEAMMGLAQIYKKY). Residues 1126 to 1464 (KSTNVLGAVN…MKSELEGPLL (339 aa)) form a disordered region. A compositionally biased stretch (polar residues) spans 1137–1155 (PLSSAGKQMQSKSSRMETV). Residues 1156–1168 (SNASSGSNPSSPG) are compositionally biased toward low complexity. The segment covering 1177–1186 (TELDQIEYED) has biased composition (acidic residues). 3 stretches are compositionally biased toward basic and acidic residues: residues 1197 to 1215 (KKSD…VEKP), 1234 to 1244 (ELSKPAQEPKS), and 1265 to 1274 (WQEKRLKEDL). Residues 1286-1295 (KKGRRGRPPK) are compositionally biased toward basic residues. The segment at residues 1287 to 1299 (KGRRGRPPKSAKM) is a DNA-binding region (a.T hook 1). Residues 1325–1342 (PTDEEDHLEISEEQDSEN) show a composition bias toward acidic residues. Basic residues predominate over residues 1347–1357 (RKGRGSSKKTP). Residues 1359-1373 (KSDSTDSALDTSRPT) are compositionally biased toward polar residues. DNA-binding regions (a.T hook) lie at residues 1375-1387 (QKRR…TPTV) and 1391-1403 (KSHV…VVSK). Residues 1390 to 1400 (KKSHVGRPRKV) show a composition bias toward basic residues. Residues 1425–1435 (SNEEETADEEV) show a composition bias toward acidic residues. The span at 1441–1453 (GRRRTAKKRRWIQ) shows a compositional bias: basic residues. Residues 1455–1464 (MKSELEGPLL) show a composition bias toward basic and acidic residues.

Belongs to the PDS5 family. As to quaternary structure, interacts with the cohesin complex. In terms of processing, phosphorylated in mitotic cells.

Its subcellular location is the nucleus. Its function is as follows. Plays a role in androgen-induced proliferative arrest. Required for maintenance of sister chromatid cohesion during mitosis. The protein is Sister chromatid cohesion protein PDS5 homolog B-B (pds5b-b) of Xenopus laevis (African clawed frog).